A 285-amino-acid chain; its full sequence is Acetyl-coenzyme A carboxylase carboxyl transferase subunit beta (285 aa).

The region spanning 23 to 285 (VFRRCDGCSH…HLTAGRRARR (263 aa)) is the CoA carboxyltransferase N-terminal domain. The Zn(2+) site is built by C27, C30, C46, and C49. Residues 27-49 (CDGCSHTHDAAELARTFEVCSQC) form a C4-type zinc finger.

This sequence belongs to the AccD/PCCB family. In terms of assembly, acetyl-CoA carboxylase is a heterohexamer composed of biotin carboxyl carrier protein (AccB), biotin carboxylase (AccC) and two subunits each of ACCase subunit alpha (AccA) and ACCase subunit beta (AccD). Zn(2+) serves as cofactor.

It is found in the cytoplasm. The enzyme catalyses N(6)-carboxybiotinyl-L-lysyl-[protein] + acetyl-CoA = N(6)-biotinyl-L-lysyl-[protein] + malonyl-CoA. It functions in the pathway lipid metabolism; malonyl-CoA biosynthesis; malonyl-CoA from acetyl-CoA: step 1/1. Component of the acetyl coenzyme A carboxylase (ACC) complex. Biotin carboxylase (BC) catalyzes the carboxylation of biotin on its carrier protein (BCCP) and then the CO(2) group is transferred by the transcarboxylase to acetyl-CoA to form malonyl-CoA. This Sorangium cellulosum (strain So ce56) (Polyangium cellulosum (strain So ce56)) protein is Acetyl-coenzyme A carboxylase carboxyl transferase subunit beta.